We begin with the raw amino-acid sequence, 303 residues long: tRNA pseudouridine synthase B (303 aa).

Aspartate 47 functions as the Nucleophile in the catalytic mechanism.

Belongs to the pseudouridine synthase TruB family. Type 1 subfamily.

It catalyses the reaction uridine(55) in tRNA = pseudouridine(55) in tRNA. Responsible for synthesis of pseudouridine from uracil-55 in the psi GC loop of transfer RNAs. In Ruegeria pomeroyi (strain ATCC 700808 / DSM 15171 / DSS-3) (Silicibacter pomeroyi), this protein is tRNA pseudouridine synthase B.